The chain runs to 427 residues: Light-independent protochlorophyllide reductase subunit N (427 aa).

Cysteine 28, cysteine 53, and cysteine 114 together coordinate [4Fe-4S] cluster.

It belongs to the BchN/ChlN family. Protochlorophyllide reductase is composed of three subunits; BchL, BchN and BchB. Forms a heterotetramer of two BchB and two BchN subunits. The cofactor is [4Fe-4S] cluster.

It catalyses the reaction chlorophyllide a + oxidized 2[4Fe-4S]-[ferredoxin] + 2 ADP + 2 phosphate = protochlorophyllide a + reduced 2[4Fe-4S]-[ferredoxin] + 2 ATP + 2 H2O. It participates in porphyrin-containing compound metabolism; bacteriochlorophyll biosynthesis (light-independent). Functionally, component of the dark-operative protochlorophyllide reductase (DPOR) that uses Mg-ATP and reduced ferredoxin to reduce ring D of protochlorophyllide (Pchlide) to form chlorophyllide a (Chlide). This reaction is light-independent. The NB-protein (BchN-BchB) is the catalytic component of the complex. This chain is Light-independent protochlorophyllide reductase subunit N, found in Jannaschia sp. (strain CCS1).